Consider the following 354-residue polypeptide: Ubiquinol oxidase 1a, mitochondrial (354 aa).

The N-terminal 62 residues, 1–62 (MMITRGGAKA…RAPTIGGMRF (62 aa)), are a transit peptide targeting the mitochondrion. The tract at residues 68–99 (LGEKTPMKEEDANQKKTENESTGGDAAGGNNK) is disordered. Residues 72–86 (TPMKEEDANQKKTEN) show a composition bias toward basic and acidic residues. Residues 179 to 199 (AMMLETVAAVPGMVGGMLLHC) form a helical membrane-spanning segment. 3 residues coordinate Fe cation: E183, E222, and H225. The helical transmembrane segment at 241-261 (ALVITVQGVFFNAYFLGYLIS) threads the bilayer. Fe cation-binding residues include E273, E324, and H327.

The protein belongs to the alternative oxidase family. In terms of assembly, homodimer; disulfide-linked. Requires Fe cation as cofactor. In terms of tissue distribution, expressed in roots, stems, cotyledons, leaves and flowers. High expression in sepals.

The protein resides in the mitochondrion inner membrane. The enzyme catalyses 2 a ubiquinol + O2 = 2 a ubiquinone + 2 H2O. When the two monomeric subunits are covalently linked by a S-S bond, the enzyme is essentially inactive. When the disulfide bond is reduced, its component sulfhydryls can associate with K-keto acids through formation of a thiohemiacetal, resulting in enzyme activation. Activated by glyoxylate, irrespective to the substitution found at Cys-127. That suggests the presence of a second activation site, possibly Cys-177. Functionally, catalyzes the cyanide-resistant oxidation of ubiquinol and the reduction of molecular oxygen to water, but does not translocate protons and consequently is not linked to oxidative phosphorylation. Increases respiration when the cytochrome respiratory pathway is restricted, or in response to low temperatures. This chain is Ubiquinol oxidase 1a, mitochondrial (AOX1A), found in Arabidopsis thaliana (Mouse-ear cress).